A 1588-amino-acid chain; its full sequence is Autotransporter adhesin EhaG (1588 aa).

Positions 1–53 are cleaved as a signal peptide; the sequence is MNKIFKVIWNPATGNYTVTSETAKSRGKKSGRSKLLISALVAGGMLSSFGALA. The interval 54–1499 is surface exposed passenger domain; the sequence is NAGNDNGQGV…QETKQYTDQR (1446 aa). The segment at 1500 to 1588 is translocator domain; it reads MVEMDNKLSK…SAALGAGIQW (89 aa). Transmembrane regions (beta stranded) follow at residues 1534 to 1544, 1548 to 1558, 1567 to 1573, and 1577 to 1588; these read GASMASIGGGT, ESAVALGVSMV, KLQGSTN, and EYSAALGAGIQW.

This sequence belongs to the autotransporter-2 (AT-2) (TC 1.B.40) family. As to quaternary structure, homotrimer.

Its subcellular location is the cell surface. It is found in the cell outer membrane. Functionally, mediates aggregation, biofilm formation and adhesion to a range of extracellular matrix (ECM) proteins, such as fibronectin, fibrinogen, laminin and collagen types I, II, III, and V. Mediates adhesion to intestinal epithelial cells. This is Autotransporter adhesin EhaG from Escherichia coli O157:H7.